The following is a 101-amino-acid chain: Small ribosomal subunit protein bS21 (101 aa).

A compositionally biased stretch (basic and acidic residues) spans 36-52 (YEKPSEKKAREKAEAVR). The segment at 36–101 (YEKPSEKKAR…GPGAGPRGPR (66 aa)) is disordered. Residues 53 to 62 (RARKLARKKL) are compositionally biased toward basic residues. Residues 83 to 101 (PGAGGPGAGGPGAGPRGPR) show a composition bias toward gly residues.

It belongs to the bacterial ribosomal protein bS21 family.

The protein is Small ribosomal subunit protein bS21 of Rhodopseudomonas palustris (strain HaA2).